A 145-amino-acid polypeptide reads, in one-letter code: UPF0310 protein Mvan_0064 (145 aa).

Belongs to the UPF0310 family.

This Mycolicibacterium vanbaalenii (strain DSM 7251 / JCM 13017 / BCRC 16820 / KCTC 9966 / NRRL B-24157 / PYR-1) (Mycobacterium vanbaalenii) protein is UPF0310 protein Mvan_0064.